The sequence spans 196 residues: Imidazoleglycerol-phosphate dehydratase (196 aa).

It belongs to the imidazoleglycerol-phosphate dehydratase family.

It localises to the cytoplasm. The enzyme catalyses D-erythro-1-(imidazol-4-yl)glycerol 3-phosphate = 3-(imidazol-4-yl)-2-oxopropyl phosphate + H2O. It functions in the pathway amino-acid biosynthesis; L-histidine biosynthesis; L-histidine from 5-phospho-alpha-D-ribose 1-diphosphate: step 6/9. This is Imidazoleglycerol-phosphate dehydratase from Clostridium botulinum (strain Langeland / NCTC 10281 / Type F).